Here is a 422-residue protein sequence, read N- to C-terminus: Glucose-1-phosphate adenylyltransferase (422 aa).

Alpha-D-glucose 1-phosphate is bound by residues tyrosine 109, glycine 175, 190–191 (EK), and serine 208.

The protein belongs to the bacterial/plant glucose-1-phosphate adenylyltransferase family. Homotetramer.

The catalysed reaction is alpha-D-glucose 1-phosphate + ATP + H(+) = ADP-alpha-D-glucose + diphosphate. Its pathway is glycan biosynthesis; glycogen biosynthesis. Its function is as follows. Involved in the biosynthesis of ADP-glucose, a building block required for the elongation reactions to produce glycogen. Catalyzes the reaction between ATP and alpha-D-glucose 1-phosphate (G1P) to produce pyrophosphate and ADP-Glc. This is Glucose-1-phosphate adenylyltransferase from Shewanella amazonensis (strain ATCC BAA-1098 / SB2B).